Here is a 209-residue protein sequence, read N- to C-terminus: C-type lectin domain family 6 member A (209 aa).

Over 1 to 20 the chain is Cytoplasmic; the sequence is MVQERQSQGKGVCWTLRLWS. The helical; Signal-anchor for type II membrane protein transmembrane segment at 21–43 threads the bilayer; the sequence is AAVISMLLLSTCFIASCVVTYQF. The Extracellular portion of the chain corresponds to 44–209; sequence IMDQPSRRLY…SICEMKKIYL (166 aa). 4 cysteine pairs are disulfide-bonded: cysteine 64-cysteine 78, cysteine 79-cysteine 90, cysteine 107-cysteine 202, and cysteine 176-cysteine 194. A C-type lectin domain is found at 86–203; sequence FGSSCYLIST…CDSKHNSICE (118 aa). Residues valine 116, asparagine 118, and glutamate 122 each contribute to the Ca(2+) site. Residue asparagine 131 is glycosylated (N-linked (GlcNAc...) asparagine). Residues glutamate 168, asparagine 170, and glutamate 174 each contribute to the Ca(2+) site. Residues 168-170, glutamate 174, tryptophan 182, and 190-191 each bind alpha-D-mannopyranose; these read EPN and ND. Residues asparagine 190, aspartate 191, and glutamate 203 each contribute to the Ca(2+) site.

Associated with FCER1G. Heterodimer with CLEC4D; this heterodimer forms a pattern recognition receptor (PRR) against fungal infection. Expressed by the XS52 DC (dendritic cell) line (at protein level). Expressed constitutively by the epidermis, and skin resident DC appear to be the major source of this expression. Expressed in the spleen and thymus. Expression was undetectable in non-DC lines, including macrophage lines (J774 and Raw), T-cell lines (7-17, HDK-1, and D10), B-cell hybridoma (5C5), a keratinocyte line (Pam 212), and a fibroblast line (NS01).

It localises to the cell membrane. Calcium-dependent lectin that acts as a pattern recognition receptor (PRR) of the innate immune system: specifically recognizes and binds alpha-mannans on C.albicans hypheas. Binding of C.albicans alpha-mannans to this receptor complex leads to phosphorylation of the immunoreceptor tyrosine-based activation motif (ITAM) of FCER1G, triggering activation of SYK, CARD9 and NF-kappa-B, consequently driving maturation of antigen-presenting cells and shaping antigen-specific priming of T-cells toward effector T-helper 1 and T-helper 17 cell subtypes. Also recognizes, in a mannose-dependent manner, allergens from house dust mite and fungi, by promoting cysteinyl leukotriene production. Recognizes soluble elements from the eggs of Shistosoma mansoni altering adaptive immune responses. This Mus musculus (Mouse) protein is C-type lectin domain family 6 member A.